The sequence spans 164 residues: Putative glutamine amidotransferase-like protein RP713 (164 aa).

Positions 39–164 (TIANPNSLFM…VITVKIIIYM (126 aa)) constitute a Glutamine amidotransferase type-1 domain.

This is Putative glutamine amidotransferase-like protein RP713 from Rickettsia prowazekii (strain Madrid E).